The following is a 403-amino-acid chain: S-adenosylmethionine synthase (403 aa).

H17 serves as a coordination point for ATP. D19 lines the Mg(2+) pocket. E45 is a K(+) binding site. L-methionine-binding residues include E58 and Q104. The segment at 104–114 (QSPDIAQGVDT) is flexible loop. Residues 179-181 (DGK), 250-251 (KF), D259, 265-266 (RK), A282, and K286 each bind ATP. L-methionine is bound at residue D259. K290 is a binding site for L-methionine.

This sequence belongs to the AdoMet synthase family. As to quaternary structure, homotetramer; dimer of dimers. Mg(2+) serves as cofactor. The cofactor is K(+).

The protein resides in the cytoplasm. The catalysed reaction is L-methionine + ATP + H2O = S-adenosyl-L-methionine + phosphate + diphosphate. Its pathway is amino-acid biosynthesis; S-adenosyl-L-methionine biosynthesis; S-adenosyl-L-methionine from L-methionine: step 1/1. Catalyzes the formation of S-adenosylmethionine (AdoMet) from methionine and ATP. The overall synthetic reaction is composed of two sequential steps, AdoMet formation and the subsequent tripolyphosphate hydrolysis which occurs prior to release of AdoMet from the enzyme. This is S-adenosylmethionine synthase from Mycobacterium marinum (strain ATCC BAA-535 / M).